We begin with the raw amino-acid sequence, 247 residues long: Uracil-DNA glycosylase (247 aa).

D83 functions as the Proton acceptor in the catalytic mechanism.

The protein belongs to the uracil-DNA glycosylase (UDG) superfamily. UNG family.

It localises to the cytoplasm. The catalysed reaction is Hydrolyzes single-stranded DNA or mismatched double-stranded DNA and polynucleotides, releasing free uracil.. Its function is as follows. Excises uracil residues from the DNA which can arise as a result of misincorporation of dUMP residues by DNA polymerase or due to deamination of cytosine. The chain is Uracil-DNA glycosylase from Deinococcus radiodurans (strain ATCC 13939 / DSM 20539 / JCM 16871 / CCUG 27074 / LMG 4051 / NBRC 15346 / NCIMB 9279 / VKM B-1422 / R1).